We begin with the raw amino-acid sequence, 1439 residues long: Microtubule organization protein AKNA (1439 aa).

2 stretches are compositionally biased toward basic and acidic residues: residues 1–10 (MASSETEIRW) and 25–35 (AWAEDKRDVDR). The tract at residues 1 to 394 (MASSETEIRW…NRKPQAPARP (394 aa)) is disordered. Ser52 carries the post-translational modification Phosphoserine. Basic and acidic residues predominate over residues 71–83 (WDPHPQPDGHQDS). Residues 89–99 (SGEEAEAEDVD) show a composition bias toward acidic residues. Over residues 263–275 (QDSSAPPAQSPQH) the composition is skewed to polar residues. Residues 276-285 (ATDRWRRETT) show a composition bias toward basic and acidic residues. Residues Ser316, Ser499, and Ser534 each carry the phosphoserine modification. Disordered regions lie at residues 507 to 562 (SAEW…SAEQ) and 659 to 682 (IDQT…PALP). Low complexity predominate over residues 533–544 (LSPSSLTSMPTL). Phosphoserine occurs at positions 767 and 770. The segment at 771–804 (LPEAMRMEEEEEGEEEEEEEGGGDSLEVDGVAAT) is PEST. Disordered regions lie at residues 775-942 (MRME…QTPE) and 977-1005 (IPRR…LRQR). Residues 778-792 (EEEEEGEEEEEEEGG) are compositionally biased toward acidic residues. Position 848 is a phosphoserine (Ser848). A compositionally biased stretch (pro residues) spans 865-875 (PPGPGVPPHPP). Composition is skewed to polar residues over residues 879 to 891 (SAAS…TSLE), 929 to 940 (SETSRVSPLTQT), and 983 to 999 (EPST…SSPS). Ser886 carries the phosphoserine modification. Positions 911-932 (HLEETWMASPETDSGFVGSETS) are PEST. Ser997 and Ser1010 each carry phosphoserine. Positions 1095–1165 (LHQPLQGSPT…RARSSSVPRE (71 aa)) are disordered. The a.T hook DNA-binding region spans 1115-1123 (RTRGRPADS). A compositionally biased stretch (basic and acidic residues) spans 1135 to 1147 (STERLPGEPRGEE). Phosphoserine occurs at positions 1172 and 1173. The segment at 1180 to 1211 (LPLFSEKSKTTKDSPQAARDGKRGVGSAGWPD) is disordered. At Ser1228 the chain carries Phosphoserine. A disordered region spans residues 1252–1329 (AGGAVTGDPL…RPPPGLWYLA (78 aa)). Residues 1303–1317 (SSTPSPKQRSKQAGS) are compositionally biased toward polar residues. Residues Ser1377, Ser1387, and Ser1424 each carry the phosphoserine modification.

Belongs to the AKNA family. In terms of assembly, interacts with DCTN1. Interacts with MAPRE1/EB1. Interacts with ODF2. Interacts with CAMSAP3. Phosphorylated; phosphorylation regulates dissociation from and reassembly at the centrosome. As to expression, predominantly expressed by lymphoid tissues. Highly expressed in the spleen, lymph nodes and peripheral blood leukocytes, expressed at lower level in the thymus. Mainly expressed by germinal center B-lymphocytes, a stage in which receptor and ligand interactions are crucial for B-lymphocyte maturation. Expressed by B- and T-lymphocytes, Natural killer cells and CD1a(+)CD14(-) but not CD1a(-)CD14(+) dendritic cells. Weakly or not expressed in fetal liver and in adult bone marrow.

The protein resides in the cytoplasm. The protein localises to the cytoskeleton. Its subcellular location is the microtubule organizing center. It localises to the centrosome. It is found in the centriole. The protein resides in the nucleus. Its function is as follows. Centrosomal protein that plays a key role in cell delamination by regulating microtubule organization. Required for the delamination and retention of neural stem cells from the subventricular zone during neurogenesis. Also regulates the epithelial-to-mesenchymal transition in other epithelial cells. Acts by increasing centrosomal microtubule nucleation and recruiting nucleation factors and minus-end stabilizers, thereby destabilizing microtubules at the adherens junctions and mediating constriction of the apical endfoot. In addition, may also act as a transcription factor that specifically activates the expression of the CD40 receptor and its ligand CD40L/CD154, two cell surface molecules on lymphocytes that are critical for antigen-dependent-B-cell development. Binds to A/T-rich promoters. It is unclear how it can both act as a microtubule organizer and as a transcription factor; additional evidences are required to reconcile these two apparently contradictory functions. This chain is Microtubule organization protein AKNA, found in Homo sapiens (Human).